The chain runs to 628 residues: MSKQEKTINLSESAQVDQQSVQPFPRSRKIYVEGSRPDIRVPMREISLHDTPTDFGGEANAPVLVYDTSGPYTDPDVIIDVRKGLADVRSAWIDARGDTERLGGLSSNFGQQRLNDAELAKLRFNHVRNPRRAKAGANVSQMHYARQGIITAEMEYVAIRENMKLQEARAAGLLKQQHAGHSFGANIPKEITAEFVREEIARGRAIIPANINHTELEPMIIGRNFLVKINGNIGNSALGSSIEEEVAKLTWGIRWGSDTVMDLSTGKHIHETREWIIRNSPVPIGTVPIYQALEKVGGVAEDLTWELFRDTLIEQAEQGVDYFTIHAGVLLRYVPLTAKRVTGIVSRGGSIMAKWCLAHHQENFLYTHFDEICEIMKAYDVSFSLGDGLRPGSIADANDAAQFGELETLGELTKIAWKHDVQCMIEGPGHVPMQLIKENMDKQLECCDEAPFYTLGPLTTDIAPGYDHITSGIGAAMIGWFGCAMLCYVTPKEHLGLPNKDDVKTGIITYKIAAHAADLAKGHPGAQIRDNALSKARFEFRWEDQFNLGLDPDTARAFHDETLPKESAKVAHFCSMCGPKFCSMKITQEVREYAANLRIDAVDVSVEEGMREQAERFRQEGSQLYHKV.

A disordered region spans residues 1–22; that stretch reads MSKQEKTINLSESAQVDQQSVQ. Residues 7 to 22 are compositionally biased toward polar residues; the sequence is TINLSESAQVDQQSVQ. Substrate-binding positions include asparagine 232, methionine 261, tyrosine 290, histidine 326, 346–348, 387–390, and glutamate 426; these read SRG and DGLR. Residue histidine 430 participates in Zn(2+) binding. Tyrosine 453 provides a ligand contact to substrate. Histidine 494 contacts Zn(2+). [4Fe-4S] cluster is bound by residues cysteine 574, cysteine 577, and cysteine 582.

The protein belongs to the ThiC family. In terms of assembly, homodimer. The cofactor is [4Fe-4S] cluster.

The catalysed reaction is 5-amino-1-(5-phospho-beta-D-ribosyl)imidazole + S-adenosyl-L-methionine = 4-amino-2-methyl-5-(phosphooxymethyl)pyrimidine + CO + 5'-deoxyadenosine + formate + L-methionine + 3 H(+). Its pathway is cofactor biosynthesis; thiamine diphosphate biosynthesis. Catalyzes the synthesis of the hydroxymethylpyrimidine phosphate (HMP-P) moiety of thiamine from aminoimidazole ribotide (AIR) in a radical S-adenosyl-L-methionine (SAM)-dependent reaction. The polypeptide is Phosphomethylpyrimidine synthase (Pseudomonas putida (strain W619)).